The primary structure comprises 348 residues: MSTFPAEPRSDIVNGHVESDFNYQTGTWSEPVFVQDHYLKVHGLAPGLNYGQQVFEGMKAYRDPNGQIQIFRPTDHALRMQRSCDAVSIPSIPESLFWASVNLAVAKNSEFVPPHASEAAMYIRPLAFGSGGWMPVAAGPQYKFVVYALPFCAYHGTLPVDAVVLEELDRAAPLGVGNVKVGGNYAPVLKWSDKARKEGFGITLHLDSKTRGEIDEFSTSGFVGIKYTESGGEKGYTLVVPNSQCIIKSVTSTSVVEVARSLGWRVEVRPIPYDELEFFDEVLAVGTAAMITSIRSITHRSKDQVFRYKTSDEPGSACEKLSRHLKGIQKGDEKDTFGWLKRVEEVTV.

Residue Arg79 participates in pyridoxal 5'-phosphate binding. N6-(pyridoxal phosphate)lysine is present on Lys180. Glu216 is a binding site for pyridoxal 5'-phosphate.

The protein belongs to the class-IV pyridoxal-phosphate-dependent aminotransferase family. Pyridoxal 5'-phosphate is required as a cofactor.

Its pathway is secondary metabolite biosynthesis. Functionally, aminotransferase; part of the gene cluster that mediates the biosynthesis of aspercryptins, linear lipopeptides built from six amino acids including 2 highly unusual and nonproteogenic amino acids, 2-amino-octanoic acid (2aoa) and 2-amino-dodecanol (2adol). The core structure of aspercryptins is as follows: Ser/Ala-Thr-Ile/Val-2aoa-Asn-2adol. The first step of aspercryptin biosynthesis is the generation of the fatty acid precursors, octanoic and dodecanoic acids, by the FAS subunits atnF and atnM. The fatty acid precursors are likely transformed into the corresponding alpha-amino fatty acids in three steps. First, they are hydroxylated by the cytochrome P450 monooxygenase atnE, then oxidized to the corresponding alpha-keto acids by the NAD(P)-dependent oxidoreductase atnD, and finally converted to the alpha-amino fatty acids by the PLP-dependent aminotransferases atnH or atnJ. the alpha-amino fatty acids, 2-amino-octanoic and 2-amino-dodecanoic acids, are recognized, activated, and covalently tethered to the NRPS atnA by its fourth and sixth adenylation domains. The second module of atnA is the Thr module and contains an epimerase (E) domain responsible for the epimerization of Thr to D-allo-Thr. Additionally, despite atnA having only one epimerase domain, the first amino acid of aspercryptin A1 is D-Ser, suggesting that serine is either loaded directly as D-Ser on the first module or that the epimerase domain in the threonine module epimerizes both L-Ser and L-Thr. After condensation of the hexapeptide of aspercryptin, the C-terminal reductase (TE) domain might be involved in the reductive release and production of the aldehyde hexapeptide. Further reduction would generate aspercryptins. The variety of aspercryptins produced reflects the flexibility of the atnA NRPS, allowing incorporation of alanine instead of serine, valine for isoleucine, and a C10 fatty amino alcohol instead of the C12 version. AtnB seems to be involved in the selectivity for Ile versus Val by the third module. Moreover, type B, C and D aspercryptins have an additional N-terminal cichorine, acetyl and propionyl group respectively. The polypeptide is Aminotransferase atnJ (Emericella nidulans (strain FGSC A4 / ATCC 38163 / CBS 112.46 / NRRL 194 / M139) (Aspergillus nidulans)).